Consider the following 282-residue polypeptide: Heme oxygenase 1, chloroplastic (282 aa).

A chloroplast-targeting transit peptide spans 1–54 (MAYLAPISSSLSIFKNPQLSRFQFSSSSPNPLFLRPRIQILSMTMNKSPSLVVV). Histidine 86 is a heme b binding site.

The protein belongs to the heme oxygenase family. Widely expressed.

Its subcellular location is the plastid. The protein resides in the chloroplast. It carries out the reaction heme b + 3 reduced [NADPH--hemoprotein reductase] + 3 O2 = biliverdin IXalpha + CO + Fe(2+) + 3 oxidized [NADPH--hemoprotein reductase] + 3 H2O + H(+). Its activity is regulated as follows. Activated by ascorbate. In terms of biological role, key enzyme in the synthesis of the chromophore of the phytochrome family of plant photoreceptors. Catalyzes the opening of the heme ring to form the open-chain tetrapyrrole biliverdin IX with the release of iron and carbon monoxide (CO). Produces specifically the biliverdin IX-alpha isomer. Can form complex with heme, is ferredoxin-dependent and its activity is increased in the presence of ascorbate. Plays a role in salt acclimation signaling. May affect the plastid-to-nucleus signaling pathway by perturbing tetrapyrrole synthesis. The plastid-to-nucleus signal plays an important role in the coordinated expression of both nuclear- and chloroplast-localized genes that encode photosynthesis-related proteins. The chain is Heme oxygenase 1, chloroplastic (HO1) from Arabidopsis thaliana (Mouse-ear cress).